We begin with the raw amino-acid sequence, 572 residues long: NADH-ubiquinone oxidoreductase chain 5 (572 aa).

A run of 16 helical transmembrane segments spans residues 4–24 (ISFVNLISMSLSCFLLSLYFL), 44–64 (IVMTFLFDWMSLLFMSFVLMI), 86–106 (IMLVLMFVLSMMLLIISPNLI), 107–127 (SILLGWDGLGLVSYCLVIYFQ), 147–167 (VALLLSIAWMLNYGSWNYIFY), 170–190 (IMQNEFEMLMIGSLVMLAAMT), 217–237 (SSTLVTAGVYLLIRFNIILST), 239–259 (WLGQLMLLLSGLTMFMAGLGA), 268–288 (IIALSTLSQLGLMMSILSMGF), 294–314 (FHLLTHALFKALLFMCAGAII), 337–357 (SACFNVSNLALCGMPFLAGFY), 372–394 (NMFSFFLYYFSTGLTVSYSFRLV), 422–442 (MGLLIMSIIGGSMLNWLIFPF), 457–477 (LFVCIVGGLFGYLISLSNLFF), 490–510 (FLGSMWFMPYISTYGMIFYPL), and 552–572 (LKIYLLLFVFWILILLILLFL).

This sequence belongs to the complex I subunit 5 family.

The protein resides in the mitochondrion inner membrane. It catalyses the reaction a ubiquinone + NADH + 5 H(+)(in) = a ubiquinol + NAD(+) + 4 H(+)(out). Core subunit of the mitochondrial membrane respiratory chain NADH dehydrogenase (Complex I) that is believed to belong to the minimal assembly required for catalysis. Complex I functions in the transfer of electrons from NADH to the respiratory chain. The immediate electron acceptor for the enzyme is believed to be ubiquinone. This Drosophila melanogaster (Fruit fly) protein is NADH-ubiquinone oxidoreductase chain 5 (mt:ND5).